Consider the following 658-residue polypeptide: Vertnin (658 aa).

The protein belongs to the vertnin family.

It is found in the nucleus. Its function is as follows. Acts as a transcription factor that regulates development of thoracic vertebrae. The polypeptide is Vertnin (VRTN) (Bos taurus (Bovine)).